The chain runs to 95 residues: Pancreatic polypeptide prohormone (95 aa).

The N-terminal stretch at 1–29 (MAAARLCLSLLLLSTCVALLLQPLLGAQG) is a signal peptide. Position 65 is a tyrosine amide (Tyr-65). Positions 89–95 (ELSPLDL) are excised as a propeptide.

This sequence belongs to the NPY family.

It is found in the secreted. Functionally, hormone secreted by pancreatic cells that acts as a regulator of pancreatic and gastrointestinal functions probably by signaling through the G protein-coupled receptor NPY4R2. The chain is Pancreatic polypeptide prohormone from Homo sapiens (Human).